The following is a 164-amino-acid chain: Diphosphoinositol polyphosphate phosphohydrolase 3-beta (164 aa).

Residues arginine 9, 17–19 (KKR), and 38–40 (SSR) contribute to the substrate site. Residues 17–144 (KKRAACLCFR…VHAEYLEKLK (128 aa)) enclose the Nudix hydrolase domain. Mg(2+) contacts are provided by glycine 49 and glutamate 65. Residues 50-71 (GGMEPEEEPGGAAVREVYEEAG) carry the Nudix box motif. The active-site Proton acceptor is glutamate 68. A Mg(2+)-binding site is contributed by glutamate 69. Residues 89–91 (RKH), arginine 115, and lysine 133 each bind substrate. Residues 144 to 164 (KLGGSPTNGNSMAPSSPDSDP) are disordered. Residues 148–164 (SPTNGNSMAPSSPDSDP) show a composition bias toward polar residues.

Belongs to the Nudix hydrolase family. DIPP subfamily. It depends on Mg(2+) as a cofactor. The cofactor is Mn(2+). Mainly expressed in testis and, at lower level in brain. According to PubMed:12121577, it is also expressed in pancreas and weakly expressed in thymus, prostate, ovary, lung, small intestine and heart.

It localises to the cytoplasm. It carries out the reaction diphospho-myo-inositol polyphosphate + H2O = myo-inositol polyphosphate + phosphate.. It catalyses the reaction P(1),P(6)-bis(5'-adenosyl) hexaphosphate + H2O = adenosine 5'-pentaphosphate + AMP + 2 H(+). The enzyme catalyses P(1),P(5)-bis(5'-adenosyl) pentaphosphate + H2O = adenosine 5'-tetraphosphate + AMP + 2 H(+). In terms of biological role, cleaves a beta-phosphate from the diphosphate groups in PP-InsP5 (diphosphoinositol pentakisphosphate), suggesting that it may play a role in signal transduction. Also able to catalyze the hydrolysis of dinucleoside oligophosphates, with Ap6A and Ap5A being the preferred substrates. The major reaction products are ADP and p4a from Ap6A and ADP and ATP from Ap5A. Also able to hydrolyze 5-phosphoribose 1-diphosphate. The polypeptide is Diphosphoinositol polyphosphate phosphohydrolase 3-beta (Homo sapiens (Human)).